An 814-amino-acid polypeptide reads, in one-letter code: Phosphatidylinositol 3-kinase VPS34 (814 aa).

In terms of domain architecture, C2 PI3K-type spans 25–177 (LDGNLPVKKS…EKLMNKYERG (153 aa)). The 176-residue stretch at 274–449 (DRDLKPSNIE…YSTYELLEEN (176 aa)) folds into the PIK helical domain. Residues 532–799 (VAGESSLFKS…LINESVSALF (268 aa)) form the PI3K/PI4K catalytic domain. The tract at residues 538 to 544 (LFKSALH) is G-loop. The catalytic loop stretch occupies residues 668–676 (GIGDRHLDN). Positions 687 to 708 (HVDFAFILGRDPKPFPPPMKLC) are activation loop.

This sequence belongs to the PI3/PI4-kinase family. In terms of assembly, interacts with VPS15. Component of a complex made of VPS38/USL1 and PI3K main subunits such as VPS15, ATG6/VPS30 and VPS34. Binds directly to VPS38/USL1.

The enzyme catalyses a 1,2-diacyl-sn-glycero-3-phospho-(1D-myo-inositol) + ATP = a 1,2-diacyl-sn-glycero-3-phospho-(1D-myo-inositol-3-phosphate) + ADP + H(+). With respect to regulation, the PI3K inhibitor LY294002 affects phosphatidylinositol 3-phosphate (PI3P) levels and triggers a decrease in proline, hydrophobic and aromatic amino acids, and sugars (e.g. raffinose) accumulation in response to salt treatment correlated with lower P5CS1 expression and higher ProDH1 expression, genes involved in proline biosynthesis and catabolism, respectively. Functionally, involved in the negative regulation of proline, hydrophobic and aromatic amino acids accumulation, especially in response to salt (NaCl), either through inhibition of their synthesis and/or promotion of their catabolism. Triggers defense responses (e.g. pathogenesis related (PR1 and PR5) gene expression and hydrogen peroxide H(2)O(2) burst) to the bacterial pathogen compatible Pseudomonas syringae pv tomato DC3000 (Pst DC3000) and incompatible Pst DC3000 (avrRpt2), by regulating reactive ogygen species (ROS) production and by promoting stomatal closure. This chain is Phosphatidylinositol 3-kinase VPS34, found in Arabidopsis thaliana (Mouse-ear cress).